The sequence spans 430 residues: MQLQSPFGDGISCECLNIRVLGIPNETKHQWIFVPRDLIKIKIYSLLQICKAENCSAVACRGCNLCILAVQGNIEISEEPQKLFQEENVKVYIYDSAISLSSVRASFPISELGIRMDIIKARAEPREDEIRASFSSLVNKEIKRTVEELLLSKRSTNRLSLLAFMRNQQLNYEAYETKLLEDASTIEKSLEKEVKTIYDSNIASPKESSDAIDADHAMIDESRSTQRRKSKPKKHVAFTDEYQVAFSDKPGKYFNQPMQYSKQFKLDNPDYEASSDSLNDIENLSTLTFRSDEELEFDFDTNNINNNKSGDSLEMSTTIPSDEENEDFTSKVDAMEIHSGSLPLNIDSSPIFTNHSPSSSLSSESSFEASPSSFVDRKNRWIQMLKKADEHSRSIQARSMGYVLSDDLDNSKAFRPYKQSFLAQGWKSLN.

Ser-204 and Ser-399 each carry phosphoserine.

The target of rapamycin complex 1 (TORC1) is composed of at least mip1, pop3/wat1, tco89, toc1 and tor2.

Its subcellular location is the cytoplasm. Functionally, component of TORC1, which regulates multiple cellular processes to control cell growth in response to environmental signals. Tor2 is essential for growth. Nutrient limitation and environmental stress signals cause inactivation of TORC1. Active TORC1 positively controls cell growth and ribosome biogenesis by regulating ribosomal protein gene expression. TORC1 negatively controls G1 cell-cycle arrest, sexual development and amino acid uptake. Represses mating, meiosis and sporulation efficiency by interfering with the functions of the transcription factor ste11 and the meiosis-promoting RNA-binding protein mei2. This Schizosaccharomyces pombe (strain 972 / ATCC 24843) (Fission yeast) protein is Target of rapamycin complex 1 subunit toc1.